Here is a 732-residue protein sequence, read N- to C-terminus: Prolyl tripeptidyl peptidase (732 aa).

Residues 1 to 24 form the signal peptide; the sequence is MKKTIFQQLFLSVCALTVALPCSA. Catalysis depends on charge relay system residues serine 603, aspartate 678, and histidine 710.

Belongs to the peptidase S9B family. In terms of processing, the N-terminus is blocked.

The enzyme catalyses Hydrolysis of Xaa-Xaa-Pro-|-Yaa- releasing the N-terminal tripeptide of a peptide with Pro as the third residue (position P1) and where Yaa is not proline.. Strongly inhibited by diisopropyl fluorophosphate and Pefabloc. Weakly inhibited by 3,4-dichloroisocumarin. Not inhibited by phenylmethylsulfonyl fluoride, leupeptin, antipain or prolinal. Activated by iodoacetamide. Functionally, serine proteinase. Releases tripeptides from the free amino terminus of proteins. Has a requirement for Pro in the P1 position, but is inactivated by Pro in the P1' position. This is Prolyl tripeptidyl peptidase from Porphyromonas gingivalis (strain ATCC BAA-308 / W83).